We begin with the raw amino-acid sequence, 334 residues long: RNA 3'-terminal phosphate cyclase (334 aa).

279–282 (HMGD) provides a ligand contact to ATP. The active-site Tele-AMP-histidine intermediate is His-303.

This sequence belongs to the RNA 3'-terminal cyclase family. Type 1 subfamily.

The protein resides in the cytoplasm. It catalyses the reaction a 3'-end 3'-phospho-ribonucleotide-RNA + ATP = a 3'-end 2',3'-cyclophospho-ribonucleotide-RNA + AMP + diphosphate. In terms of biological role, catalyzes the conversion of 3'-phosphate to a 2',3'-cyclic phosphodiester at the end of RNA. The mechanism of action of the enzyme occurs in 3 steps: (A) adenylation of the enzyme by ATP; (B) transfer of adenylate to an RNA-N3'P to produce RNA-N3'PP5'A; (C) and attack of the adjacent 2'-hydroxyl on the 3'-phosphorus in the diester linkage to produce the cyclic end product. The biological role of this enzyme is unknown but it is likely to function in some aspects of cellular RNA processing. This Metallosphaera sedula (strain ATCC 51363 / DSM 5348 / JCM 9185 / NBRC 15509 / TH2) protein is RNA 3'-terminal phosphate cyclase.